A 275-amino-acid chain; its full sequence is Protein CIMAP1C (275 aa).

2 STPGR repeats span residues 200–225 and 236–261; these read PGPAMHTRPEPSVYQNRSPLFSMAKR and PGPGSHDIQPVTVHKPRIPAFTMGIK.

This sequence belongs to the CIMAP family.

The chain is Protein CIMAP1C (CIMAP1C) from Mus musculus (Mouse).